Here is a 1628-residue protein sequence, read N- to C-terminus: Centrosomal protein of 170 kDa protein B (1628 aa).

The region spanning 23-73 (IFVGREDCELMLQSRSVDKQHAVINYDSDKDEHRVKDLGSLNGTFVNDVRI) is the FHA domain. Disordered stretches follow at residues 136 to 201 (EHGA…DMTQ), 329 to 369 (LIRR…SEDP), 415 to 504 (PRKK…GKNY), 566 to 586 (SDVR…DAGT), 637 to 659 (LASE…KLSN), 719 to 739 (EHQG…LPQL), 758 to 842 (ESQR…KKST), 1005 to 1084 (VSLV…LDFT), 1100 to 1341 (TVSS…EDEQ), 1379 to 1405 (AGDG…TPAS), 1443 to 1463 (GSTG…DPSK), and 1560 to 1628 (HLDV…TYIV). Composition is skewed to basic and acidic residues over residues 147–156 (KQDKADKKAT) and 180–201 (KLDK…DMTQ). Over residues 421–434 (QSFTHNANSPQNDT) the composition is skewed to polar residues. Basic and acidic residues predominate over residues 436–453 (PVLKAKAEKRKGTLHVEK). Over residues 454–479 (VSTNGMGSTAPASKSLSSPSFPQRSN) the composition is skewed to polar residues. The segment covering 481–490 (FRREKTEDRI) has biased composition (basic and acidic residues). Basic and acidic residues-rich tracts occupy residues 758-773 (ESQR…RISE) and 817-828 (WKGEESHSREPS). Residues 1005–1023 (VSLVSDKNVPSHSQKNRIV) are compositionally biased toward polar residues. The span at 1045 to 1056 (ARERLSEKRRTV) shows a compositional bias: basic and acidic residues. Over residues 1129–1150 (RSSNAQKVQQALTRSNSLSTPR) the composition is skewed to polar residues. Over residues 1176-1193 (SNISPGTSSANSSSAKSS) the composition is skewed to low complexity. The segment covering 1216-1227 (NVPSDSETTSSV) has biased composition (polar residues). Low complexity-rich tracts occupy residues 1261 to 1280 (TQKQ…SSST), 1312 to 1328 (ASTA…SRRQ), and 1381 to 1398 (DGDS…SISS). The segment covering 1564 to 1596 (PSSNKKTSSTILTSNPLSRTTNNSAARTESQTP) has biased composition (polar residues). Over residues 1606–1618 (SSSSSSRSPGSSF) the composition is skewed to low complexity.

It belongs to the CEP170 family.

The protein localises to the cytoplasm. It localises to the cytoskeleton. Its function is as follows. Plays a role in microtubule organization. In Xenopus tropicalis (Western clawed frog), this protein is Centrosomal protein of 170 kDa protein B (cep170b).